The sequence spans 206 residues: Venom allergen 5 (206 aa).

4 disulfides stabilise this stretch: Cys-5-Cys-18, Cys-9-Cys-103, Cys-28-Cys-96, and Cys-172-Cys-189. Positions 47 to 191 constitute an SCP domain; that stretch reads LKVHNDFRQK…WYTHYLVCNY (145 aa).

The protein belongs to the CRISP family. Venom allergen 5-like subfamily. In terms of tissue distribution, expressed by the venom gland.

The protein localises to the secreted. This chain is Venom allergen 5, found in Vespula vidua (Ground hornet).